We begin with the raw amino-acid sequence, 292 residues long: Elongation factor Ts (292 aa).

The tract at residues 80 to 83 is involved in Mg(2+) ion dislocation from EF-Tu; the sequence is TDFV.

This sequence belongs to the EF-Ts family.

Its subcellular location is the cytoplasm. Its function is as follows. Associates with the EF-Tu.GDP complex and induces the exchange of GDP to GTP. It remains bound to the aminoacyl-tRNA.EF-Tu.GTP complex up to the GTP hydrolysis stage on the ribosome. The protein is Elongation factor Ts of Limosilactobacillus fermentum (strain NBRC 3956 / LMG 18251) (Lactobacillus fermentum).